We begin with the raw amino-acid sequence, 559 residues long: O-fucosyltransferase 37 (559 aa).

A helical; Signal-anchor for type II membrane protein membrane pass occupies residues 53 to 73 (FFLLLISLSLVFSGISFLTFS). N-linked (GlcNAc...) asparagine glycosylation occurs at Asn126. 331 to 333 (HLR) is a binding site for substrate. Residues Asn372, Asn403, Asn447, and Asn504 are each glycosylated (N-linked (GlcNAc...) asparagine).

Belongs to the glycosyltransferase GT106 family.

The protein resides in the membrane. The protein operates within glycan metabolism. The sequence is that of O-fucosyltransferase 37 from Arabidopsis thaliana (Mouse-ear cress).